A 416-amino-acid polypeptide reads, in one-letter code: PTS system N-acetylglucosamine-specific EIIC component (416 aa).

Residues 16 to 406 (SGLFQGLQKV…FNLKTPGREP (391 aa)) form the PTS EIIC type-1 domain. 10 helical membrane passes run 68–88 (AGGA…AIGF), 96–116 (TALA…AFPV), 130–150 (TYND…AVLW), 170–190 (LVPI…GLVW), 196–216 (GISN…ALFG), 266–286 (IFQA…ALAM), 298–318 (VLGM…TEPI), 323–343 (MFIA…SMAI), 344–364 (TWGL…DYAL), and 375–395 (IIPI…FAIV).

The protein resides in the cell membrane. Its function is as follows. The phosphoenolpyruvate-dependent sugar phosphotransferase system (sugar PTS), a major carbohydrate active transport system, catalyzes the phosphorylation of incoming sugar substrates concomitantly with their translocation across the cell membrane. This system is involved in N-acetylglucosamine (GlcNAc) transport. High-affinity permease, which exhibits a narrow specificity for GlcNAc. Essential for C-signaling between vegetative growth and development. The protein is PTS system N-acetylglucosamine-specific EIIC component of Streptomyces coelicolor (strain ATCC BAA-471 / A3(2) / M145).